A 936-amino-acid polypeptide reads, in one-letter code: Myocardin-related transcription factor A (936 aa).

RPEL repeat units follow at residues 15-40, 59-84, and 103-128; these read TVLQ…PPLK, DYLK…EETS, and DDLN…PVET. The Bipartite Nuclear localization signal motif lies at 62–100; the sequence is KRKIRSRPERAELVRMHILEETSAEPSLQAKQIKLKRAR. 3 disordered regions span residues 146–185, 234–258, and 401–422; these read SSFD…TQIP, SQPK…KVKK, and SQDP…QAKP. The span at 160–170 shows a compositional bias: polar residues; it reads QPASQESQGSI. The segment covering 239-254 has biased composition (basic and acidic residues); it reads SFEKSQRIKKPKEPKP. The 35-residue stretch at 368–402 folds into the SAP domain; that stretch reads LDEMKVAELKLELKHRGLPVSGTKIDLIERLKASQ. Residues 404–416 show a composition bias toward low complexity; it reads PSTATAASAKPTP. The stretch at 497 to 542 forms a coiled coil; that stretch reads DARDKDLMLREKDRQIEELTQRLKQKQELVERLRQQLEQEKRTPQH. Positions 707–755 are disordered; sequence HNESPATPPQQPEPEPPPHSIFLTHSSPQWSKNPPGYDEAMKQQPNSCE. Over residues 712–725 the composition is skewed to pro residues; the sequence is ATPPQQPEPEPPPH. Residues 729–738 are compositionally biased toward polar residues; it reads LTHSSPQWSK.

Interacts with srf, forming the srf-mrtfa nuclear complex which binds the 5'-CArG-3' consensus motif (CArG box) on DNA via srf. Interacts (via RPEL repeats) with globular actin (G-actin), thereby regulating its subcellular location and activity of the complex formed with srf.

It localises to the cytoplasm. The protein localises to the nucleus. Functionally, transcription coactivator that associates with the serum response factor (srf) transcription factor to control expression of genes regulating the cytoskeleton during development, morphogenesis and cell migration. The srf-mrtfa complex activity responds to Rho GTPase-induced changes in cellular globular actin (G-actin) concentration, thereby coupling cytoskeletal gene expression to cytoskeletal dynamics. Mrtfa binds G-actin via its RPEL repeats, regulating activity of the mrtfa-srf complex. Activity is also regulated by filamentous actin (F-actin) in the nucleus. The sequence is that of Myocardin-related transcription factor A (mrtfa) from Xenopus laevis (African clawed frog).